The primary structure comprises 1224 residues: Potassium channel subfamily T member 1 (1224 aa).

Residues 1–37 (MARAKLPRSPSEGKAGPGDTPAGAAAPEEPHGLSPLL) form a disordered region. Residues 1-79 (MARAKLPRSP…LFFIKNQRSS (79 aa)) lie on the Cytoplasmic side of the membrane. The segment covering 13 to 27 (GKAGPGDTPAGAAAP) has biased composition (low complexity). The chain crosses the membrane as a helical span at residues 80–112 (LRIRLFNFSLKLLTCLLYIVRVLLDNPDQGIGC). The Extracellular segment spans residues 113 to 139 (WGCTKYNYTFNGSSSEFHWAPILWVER). N-linked (GlcNAc...) asparagine glycosylation is found at Asn-119 and Asn-123. Residues 140–164 (KMALWVIQVIVATISFLETMLIIYL) traverse the membrane as a helical segment. Over 165–178 (SYKGNIWEQIFHVS) the chain is Cytoplasmic. A helical membrane pass occupies residues 179–194 (FVLEMINTLPFIITVF). The Extracellular segment spans residues 195–201 (WPPLRNL). The chain crosses the membrane as a helical span at residues 202-219 (FIPVFLNCWLAKHALENM). Topologically, residues 220 to 232 (INDFHRAILRTQS) are cytoplasmic. A helical membrane pass occupies residues 233–260 (AMFNQVLILFCTLLCLVFTGTCGIQHLE). Over 261–267 (RAGGNLN) the chain is Extracellular. The pore-forming intramembrane region spans 268 to 288 (LLTSFYFCIVTFSTVGFGDVT). Positions 282 and 283 each coordinate K(+). Residues 289 to 290 (PK) are Extracellular-facing. A helical transmembrane segment spans residues 291 to 324 (IWPSQLLVVILICVTLVVLPLQFEELVYLWMERQ). Over 325-1224 (KSGGNYSRHR…NPETRDETQL (900 aa)) the chain is Cytoplasmic. An RCK N-terminal 1 domain is found at 338–474 (EKHVVLCVSS…FHVKFADHVV (137 aa)). The Na(+) site is built by Leu-499, His-502, Ser-524, and Asn-526. The disordered stretch occupies residues 644-675 (QNTDCRPSQGGSGGDGTKLTLPTENGSGSRRP). Over residues 663 to 673 (TLPTENGSGSR) the composition is skewed to polar residues. Zn(2+) contacts are provided by Cys-744 and Cys-745. K(+) is bound by residues Arg-747 and Lys-750. Residues Arg-747 and Lys-750 each coordinate Na(+). Residues Cys-752 and His-754 each coordinate Zn(2+). 4 residues coordinate K(+): Asn-755, Tyr-757, Tyr-763, and Gly-764. A Na(+)-binding site is contributed by Tyr-757. Phe-765 is a binding site for Na(+). Residues 767–907 (NKLIIVSAET…QFRAKDSYSL (141 aa)) enclose the RCK N-terminal 2 domain. Residues Ser-773, Leu-804, Asp-806, Gly-828, and Asp-851 each contribute to the K(+) site. Disordered stretches follow at residues 1038 to 1066 (REAK…ADPV) and 1198 to 1224 (SSSQ…ETQL). 2 stretches are compositionally biased toward low complexity: residues 1045–1055 (GTRAASGSGST) and 1198–1215 (SSSQ…SSCN).

The protein belongs to the potassium channel family. Calcium-activated (TC 1.A.1.3) subfamily. KCa4.1/KCNT1 sub-subfamily. Homotetramer; which constitutes the Na(+)-activated K(+) channel. Interacts with KCNT2; these heterodimer channels differ from the homomers in their unitary conductance, kinetic behavior, subcellular localization, and response to activation of protein kinase C. Interacts (via C-terminus) with FMR1; this interaction alters gating properties of KCNT1. Interacts with CRBN via its cytoplasmic C-terminus. In terms of processing, phosphorylated by protein kinase C. Phosphorylation of the C-terminal domain increases channel activity. In terms of tissue distribution, enriched in the brainstem and olfactory bulb and detected at significant levels in four different brain regions.

It is found in the cell membrane. The enzyme catalyses K(+)(in) = K(+)(out). Activated by high intracellular Na(+). In addition to activation by Na(+), is cooperatively activated by intracellular Cl(-) levels. Inhibited by Zn(2+). Activated upon stimulation of G-protein coupled receptors, such as CHRM1 and GRIA1. Its function is as follows. Sodium-activated K(+) channel. Acts as an important mediator of neuronal membrane excitability. Contributes to the delayed outward currents. Regulates neuronal bursting in sensory neurons. Contributes to synaptic development and plasticity. The polypeptide is Potassium channel subfamily T member 1 (Kcnt1) (Mus musculus (Mouse)).